Consider the following 229-residue polypeptide: UPF0441 protein YE3666 (229 aa).

Disordered regions lie at residues 101 to 125 (PAQAGMVPTSSSSSETTAAAPQQSG) and 190 to 229 (KPAVTNTITRGGFGESVAKQSSMQRSAATSSKTSTRSMGG). Low complexity-rich tracts occupy residues 109–120 (TSSSSSETTAAA) and 214–229 (RSAATSSKTSTRSMGG).

It belongs to the UPF0441 family.

The protein is UPF0441 protein YE3666 of Yersinia enterocolitica serotype O:8 / biotype 1B (strain NCTC 13174 / 8081).